A 266-amino-acid chain; its full sequence is MSDILKKICDVKVEEVAAAQKRVSFTDMRRDAESRVLTRDFVGALRAKIDQGQAGVIAEIKKASPSKGVIREDFIPADIAQSYAEGDGKVGAACLSVLTDRQFFQGQPDYLKQARASCPLPVLRKDFMIDPYQIYESRAFGADCVLLIAACLEDGLMAEMEQIARSLDMAVLVEVHDGAELERALRLQTPLVGINNRNLRTFEVSLQTTLDLKKEVPADRLLVAESGILAPVDVHTLRDAGVNAFLVGEAFMRAPDPGRALAQLFA.

This sequence belongs to the TrpC family.

It carries out the reaction 1-(2-carboxyphenylamino)-1-deoxy-D-ribulose 5-phosphate + H(+) = (1S,2R)-1-C-(indol-3-yl)glycerol 3-phosphate + CO2 + H2O. Its pathway is amino-acid biosynthesis; L-tryptophan biosynthesis; L-tryptophan from chorismate: step 4/5. The polypeptide is Indole-3-glycerol phosphate synthase (Acidovorax sp. (strain JS42)).